We begin with the raw amino-acid sequence, 102 residues long: Large ribosomal subunit protein uL24 (102 aa).

It belongs to the universal ribosomal protein uL24 family. Part of the 50S ribosomal subunit.

Its function is as follows. One of two assembly initiator proteins, it binds directly to the 5'-end of the 23S rRNA, where it nucleates assembly of the 50S subunit. Functionally, one of the proteins that surrounds the polypeptide exit tunnel on the outside of the subunit. This chain is Large ribosomal subunit protein uL24, found in Herpetosiphon aurantiacus (strain ATCC 23779 / DSM 785 / 114-95).